A 711-amino-acid chain; its full sequence is MEDKSKQCLQDPMCLGIESKHYIGSHGRHQVDFLEEMVDPGEISLDSLIFQRPEDEVSYQKKGGGPASSDNNELEKVLDSILDTSSSSHLHPWDDYVIPEFQEISVTSASSTKTLGDLTTDKKEAGVWTGTTAVENKSIPSLVPKEQDTLEYSIEGQLEGKGRRHGVLASRHPTLPPDGKMPMLPGSAVYLPGQPRHIEEDNDNYDQKHLSPYPCHSSCSHHDGKIKQEDSLYAEYGMPSSNPATPGPDPSLEYICKSETAAAYDNFRSTLGKSSDKAIPVLPTSSTTSQNLYQPLSLNDHQQNAYQSGTVNDAFVPQMHLSYEQYSRPDDPDQSSQYGFDALPRKICLICSDEASGCHYGALTCGSCKVFFKRAIEGQHNYLCAGRNDCIGDKIRRKNCPSCRLKKCCQAGMVLGGRKFKKYNRLKPGRELDRIATSSPMECQQALTRRVSNSSAQEVQYFPELLQILQSIEPEVLYAGYDYTKPETPSALLCSLNQLCERQLLCVVKWSKSLPGFRNMHIDDQIILLQYSWMSLMVFAMGWRSYKHVSGQMLYFAPDLVLNERRMKDSSFYSLCIAMRQLPQEFVKLQISQEEFLCMKALLLLNTIPLEGLKSQSYFDEMRSNYIRELAKAISLRHKGVVASSQRFYHLTKVLDSMHELVKQLHLYCLNTFLQSRALSVEFPEMMTEVISAQLPKILAGMAKPLIFHKK.

Positions 1–347 (MEDKSKQCLQ…YGFDALPRKI (347 aa)) are modulating, Pro-Rich. 2 NR C4-type zinc fingers span residues 348-368 (CLIC…CGSC) and 384-408 (CAGR…LKKC). Residues 348–420 (CLICSDEASG…AGMVLGGRKF (73 aa)) constitute a DNA-binding region (nuclear receptor). One can recognise an NR LBD domain in the interval 457–691 (QEVQYFPELL…EFPEMMTEVI (235 aa)).

This sequence belongs to the nuclear hormone receptor family. NR3 subfamily. Expressed in all tissues examined: highly expressed in testis and brain. Also expressed in heart, lung, liver, kidney, stomach and small intestine.

Its subcellular location is the nucleus. The steroid hormones and their receptors are involved in the regulation of eukaryotic gene expression and affect cellular proliferation and differentiation in target tissues. The protein is Progesterone receptor (pgr) of Rana dybowskii (Dybovsky's frog).